We begin with the raw amino-acid sequence, 87 residues long: MNKKYAKKFKKKPCQFCEAKLFYIDYKDIEVLQRFINTFGKIQPSRITGNCAKHQRKLALAVKRARFVALLPFIGDRIRGNYDKTRV.

This sequence belongs to the bacterial ribosomal protein bS18 family. Part of the 30S ribosomal subunit. Forms a tight heterodimer with protein bS6.

Its function is as follows. Binds as a heterodimer with protein bS6 to the central domain of the 16S rRNA, where it helps stabilize the platform of the 30S subunit. This Mesomycoplasma hyopneumoniae (strain 232) (Mycoplasma hyopneumoniae) protein is Small ribosomal subunit protein bS18.